Here is a 568-residue protein sequence, read N- to C-terminus: Nucleoprotein (568 aa).

A binding site for the cap structure m7GTP region spans residues 54–240; that stretch reads MRKEKRDDSD…IDGNKSAINI (187 aa). Mn(2+) is bound by residues D388 and E390. Zn(2+)-binding residues include E398, C505, H508, and C528. D532 contacts Mn(2+).

Belongs to the arenaviridae nucleocapsid protein family. In terms of assembly, homomultimerizes to form the nucleocapsid. Binds to viral genomic RNA. Interacts with glycoprotein G2. Interacts with protein Z; this interaction probably directs the encapsidated genome to budding sites. Interacts with protein L; this interaction does not interfere with Z-L interaction. Interacts with host IKBKE (via Protein kinase domain); the interaction inhibits IKBKE kinase activity.

Its subcellular location is the virion. It is found in the host cytoplasm. In terms of biological role, encapsidates the genome, protecting it from nucleases. The encapsidated genomic RNA is termed the nucleocapsid (NC). Serves as template for viral transcription and replication. The increased presence of protein N in host cell does not seem to trigger the switch from transcription to replication as observed in other negative strain RNA viruses. Through the interaction with host IKBKE, strongly inhibits the phosphorylation and nuclear translocation of host IRF3, a protein involved in interferon activation pathway, leading to the inhibition of interferon-beta and IRF3-dependent promoters activation. Also encodes a functional 3'-5' exoribonuclease that degrades preferentially dsRNA substrates and thereby participates in the suppression of interferon induction. In Praomys (African soft-furred rats), this protein is Nucleoprotein.